The primary structure comprises 544 residues: Aspartokinase 2, chloroplastic (544 aa).

The transit peptide at M1 to C84 directs the protein to the chloroplast. ATP contacts are provided by K87, G90, and S119. E203 is a substrate binding site. 2 consecutive ACT domains span residues I401–I479 and S481–P544.

It belongs to the aspartokinase family. Expressed in stems, leaves, floral organs and young seedlings.

It localises to the plastid. The protein localises to the chloroplast. It catalyses the reaction L-aspartate + ATP = 4-phospho-L-aspartate + ADP. It participates in amino-acid biosynthesis; L-lysine biosynthesis via DAP pathway; (S)-tetrahydrodipicolinate from L-aspartate: step 1/4. The protein operates within amino-acid biosynthesis; L-methionine biosynthesis via de novo pathway; L-homoserine from L-aspartate: step 1/3. It functions in the pathway amino-acid biosynthesis; L-threonine biosynthesis; L-threonine from L-aspartate: step 1/5. Its activity is regulated as follows. Allosterically inhibited by lysine, but not by S-adenosyl-L-methionine (SAM). K(0.5) for lysine in the presence of physiological concentrations of substrates is 12.5 uM. No inhibition by threonine or leucine and no activation or inhibition by alanine, cysteine, isoleucine, serine, valine, methionine, glutamine, asparagine, glutamic acid or arginine. In terms of biological role, involved in the first step of essential amino acids lysine, threonine, methionine and isoleucine synthesis via the aspartate-family pathway. The protein is Aspartokinase 2, chloroplastic (AK2) of Arabidopsis thaliana (Mouse-ear cress).